Reading from the N-terminus, the 1243-residue chain is Plasma membrane calcium-transporting ATPase 2 (1243 aa).

The segment covering 1–13 has biased composition (polar residues); the sequence is MGDMTNSDFYSKN. The segment at 1–24 is disordered; sequence MGDMTNSDFYSKNQRNESSHGGEF. The Cytoplasmic segment spans residues 1 to 94; it reads MGDMTNSDFY…NFIPPKKPKT (94 aa). A phosphoserine mark is found at serine 18 and serine 27. A helical membrane pass occupies residues 95 to 115; sequence FLQLVWEALQDVTLIILEIAA. At 116–152 the chain is on the extracellular side; the sequence is IISLGLSFYHPPGESNEGCATAQGGAEDEGEAEAGWI. Residues 153 to 173 traverse the membrane as a helical segment; the sequence is EGAAILLSVICVVLVTAFNDW. The Cytoplasmic portion of the chain corresponds to 174–390; it reads SKEKQFRGLQ…KEKSVLQGKL (217 aa). The span at 296–308 shows a compositional bias: basic and acidic residues; it reads EEKKDKKGVKKGD. The disordered stretch occupies residues 296-382; it reads EEKKDKKGVK…KKKANMHKKE (87 aa). Low complexity-rich tracts occupy residues 313-330 and 337-356; these read PAAD…ANAS and QDGS…GAAA. The helical transmembrane segment at 391–410 threads the bilayer; sequence TKLAVQIGKAGLVMSAITVI. Topologically, residues 411–443 are extracellular; sequence ILVLYFTVDTFVVNKKPWLTECTPVYVQYFVKF. The chain crosses the membrane as a helical span at residues 444–461; the sequence is FIIGVTVLVVAVPEGLPL. Topologically, residues 462–875 are cytoplasmic; the sequence is AVTISLAYSV…MWGRNVYDSI (414 aa). Aspartate 499 functions as the 4-aspartylphosphate intermediate in the catalytic mechanism. Residues aspartate 820 and aspartate 824 each coordinate Mg(2+). Residues 876 to 895 form a helical membrane-spanning segment; that stretch reads SKFLQFQLTVNVVAVIVAFT. At 896 to 905 the chain is on the extracellular side; it reads GACITQDSPL. A helical transmembrane segment spans residues 906–926; it reads KAVQMLWVNLIMDTFASLALA. Residues 927–946 are Cytoplasmic-facing; that stretch reads TEPPTETLLLRKPYGRNKPL. Residues 947-969 traverse the membrane as a helical segment; it reads ISRTMMKNILGHAVYQLTLIFTL. Over 970-987 the chain is Extracellular; that stretch reads LFVGEKMFQIDSGRNAPL. The chain crosses the membrane as a helical span at residues 988–1009; it reads HSPPSEHYTIIFNTFVMMQLFN. Residues 1010 to 1028 lie on the Cytoplasmic side of the membrane; sequence EINARKIHGERNVFDGIFR. The helical transmembrane segment at 1029–1050 threads the bilayer; it reads NPIFCTIVLGTFAIQIVIVQFG. The Extracellular portion of the chain corresponds to 1051-1060; it reads GKPFSCSPLQ. A helical transmembrane segment spans residues 1061–1082; sequence LDQWMWCIFIGLGELVWGQVIA. Over 1083–1243 the chain is Cytoplasmic; that stretch reads TIPTSRLKFL…SPIHSLETSL (161 aa). Phosphoserine occurs at positions 1107, 1116, 1117, 1121, 1130, 1131, and 1138. The interval 1123–1140 is calmodulin-binding subdomain A; that stretch reads LRRGQILWFRGLNRIQTQ. Threonine 1139 carries the post-translational modification Phosphothreonine; by PKC. The calmodulin-binding subdomain B stretch occupies residues 1141 to 1150; the sequence is IRVVKAFRSS. Valine 1144, phenylalanine 1147, arginine 1148, tyrosine 1152, arginine 1161, threonine 1162, isoleucine 1175, and serine 1178 each carry phosphoserine. Position 1188 is a phosphothreonine (threonine 1188). A disordered region spans residues 1194 to 1243; the sequence is AALKQNSSPPSSLNKNNSAIDSGINLTTDTSKSATSSSPGSPIHSLETSL. Low complexity-rich tracts occupy residues 1196–1211 and 1220–1234; these read LKQN…KNNS and TTDT…SPGS. At serine 1201 the chain carries Phosphoserine; by PKA. A Phosphoserine modification is found at serine 1211.

The protein belongs to the cation transport ATPase (P-type) (TC 3.A.3) family. Type IIB subfamily. As to quaternary structure, interacts with PDZD11. As to expression, isoforms containing segment B are found in brain, uterus, liver and kidney and in low levels in other tissues. Isoforms containing segment W are found in kidney, uterus, and pancreas. Isoforms containing segment Y are found in pancreas and in low levels in brain and heart. Isoforms containing segment Z are found in brain and heart and isoforms containing segment X are found in low levels in brain. Isoforms containing segment A are found in low levels in heart and small intestine while isoforms containing segment C are found in testis and in low levels in other tissues.

It localises to the cell membrane. It is found in the synapse. The protein resides in the apical cell membrane. The protein localises to the basolateral cell membrane. The enzyme catalyses Ca(2+)(in) + ATP + H2O = Ca(2+)(out) + ADP + phosphate + H(+). Functionally, ATP-driven Ca(2+) ion pump involved in the maintenance of basal intracellular Ca(2+) levels in specialized cells of cerebellar circuit and vestibular and cochlear systems. Uses ATP as an energy source to transport cytosolic Ca(2+) ions across the plasma membrane to the extracellular compartment. Has fast activation and Ca(2+) clearance rate suited to control fast neuronal Ca(2+) dynamics. At parallel fiber to Purkinje neuron synapse, mediates presynaptic Ca(2+) efflux in response to climbing fiber-induced Ca(2+) rise. Provides for fast return of Ca(2+) concentrations back to their resting levels, ultimately contributing to long-term depression induction and motor learning. Plays an essential role in hearing and balance. In cochlear hair cells, shuttles Ca(2+) ions from stereocilia to the endolymph and dissipates Ca(2+) transients generated by the opening of the mechanoelectrical transduction channels. Regulates Ca(2+) levels in the vestibular system, where it contributes to the formation of otoconia. In non-excitable cells, regulates Ca(2+) signaling through spatial control of Ca(2+) ions extrusion and dissipation of Ca(2+) transients generated by store-operated channels. In lactating mammary gland, allows for the high content of Ca(2+) ions in the milk. The protein is Plasma membrane calcium-transporting ATPase 2 (Atp2b2) of Rattus norvegicus (Rat).